We begin with the raw amino-acid sequence, 451 residues long: MSLPTSLWDKCLGYLRDEIPPQQYNTWIRPLHAIESKQNGLLLLAPNRFVLDWINERFLNRITELLDELSDTPPQIRLQIGSRSTEMPTKNSHEPSHRKAAAPPAGTTISHTQANINSNFTFDSFVEGKSNQLARAAATQVAENPGQAYNPLFIYGGVGLGKTHLMHAVGNAILRKDSSKKVLYLHSERFVADMIKALQHNAMNEFKRFYRSLNALLIDDIQFFAGKDRSQEEFFHTFNALLDGQQQIILTCDRYPKEINGLEERLQSRFGWGLTVAIEPPELETRVAILMSKAEQLKVHLPHEVAFFIAKHIQSNVRELEGALKRVIANAHFTGQSITVDFTREALKDLLTLQARLITIENIQKTVAEYYKIKVADLLAKRRNRSVARPRQMAMALAKELTNHSLPEIGDAFGGRDHTTVLHACRKVKELLATSLDILEDYKNLMRILSG.

The segment at methionine 1–threonine 72 is domain I, interacts with DnaA modulators. Positions threonine 72–alanine 114 are domain II. A compositionally biased stretch (polar residues) spans glycine 81–lysine 90. Residues glycine 81 to glycine 106 are disordered. The interval asparagine 115–alanine 331 is domain III, AAA+ region. ATP is bound by residues glycine 159, glycine 161, lysine 162, and threonine 163. The interval histidine 332–glycine 451 is domain IV, binds dsDNA.

This sequence belongs to the DnaA family. Oligomerizes as a right-handed, spiral filament on DNA at oriC.

Its subcellular location is the cytoplasm. Its function is as follows. Plays an essential role in the initiation and regulation of chromosomal replication. ATP-DnaA binds to the origin of replication (oriC) to initiate formation of the DNA replication initiation complex once per cell cycle. Binds the DnaA box (a 9 base pair repeat at the origin) and separates the double-stranded (ds)DNA. Forms a right-handed helical filament on oriC DNA; dsDNA binds to the exterior of the filament while single-stranded (ss)DNA is stabiized in the filament's interior. The ATP-DnaA-oriC complex binds and stabilizes one strand of the AT-rich DNA unwinding element (DUE), permitting loading of DNA polymerase. After initiation quickly degrades to an ADP-DnaA complex that is not apt for DNA replication. Binds acidic phospholipids. This is Chromosomal replication initiator protein DnaA from Coxiella burnetii (strain CbuK_Q154) (Coxiella burnetii (strain Q154)).